The following is a 231-amino-acid chain: ATP-dependent dethiobiotin synthetase BioD (231 aa).

An ATP-binding site is contributed by 12 to 17; the sequence is EVGKTV. Position 16 (T16) interacts with Mg(2+). K37 is an active-site residue. A substrate-binding site is contributed by S41. Residues D51, 112-115, and 202-204 each bind ATP; these read EGAG and PKL. Mg(2+) is bound by residues D51 and E112.

It belongs to the dethiobiotin synthetase family. Homodimer. The cofactor is Mg(2+).

It is found in the cytoplasm. The enzyme catalyses (7R,8S)-7,8-diammoniononanoate + CO2 + ATP = (4R,5S)-dethiobiotin + ADP + phosphate + 3 H(+). It functions in the pathway cofactor biosynthesis; biotin biosynthesis; biotin from 7,8-diaminononanoate: step 1/2. Catalyzes a mechanistically unusual reaction, the ATP-dependent insertion of CO2 between the N7 and N8 nitrogen atoms of 7,8-diaminopelargonic acid (DAPA, also called 7,8-diammoniononanoate) to form a ureido ring. The chain is ATP-dependent dethiobiotin synthetase BioD from Bacillus subtilis (strain 168).